Here is a 963-residue protein sequence, read N- to C-terminus: Isoleucine--tRNA ligase (963 aa).

Residues 66 to 76 carry the 'HIGH' region motif; the sequence is PYANGDIHIGH. Position 596 (E596) interacts with L-isoleucyl-5'-AMP. The 'KMSKS' region signature appears at 637-641; sequence KMSKS. K640 provides a ligand contact to ATP. C926, C929, C946, and C949 together coordinate Zn(2+).

The protein belongs to the class-I aminoacyl-tRNA synthetase family. IleS type 1 subfamily. Monomer. Zn(2+) serves as cofactor.

The protein localises to the cytoplasm. It carries out the reaction tRNA(Ile) + L-isoleucine + ATP = L-isoleucyl-tRNA(Ile) + AMP + diphosphate. In terms of biological role, catalyzes the attachment of isoleucine to tRNA(Ile). As IleRS can inadvertently accommodate and process structurally similar amino acids such as valine, to avoid such errors it has two additional distinct tRNA(Ile)-dependent editing activities. One activity is designated as 'pretransfer' editing and involves the hydrolysis of activated Val-AMP. The other activity is designated 'posttransfer' editing and involves deacylation of mischarged Val-tRNA(Ile). The polypeptide is Isoleucine--tRNA ligase (Cupriavidus pinatubonensis (strain JMP 134 / LMG 1197) (Cupriavidus necator (strain JMP 134))).